Reading from the N-terminus, the 147-residue chain is Large ribosomal subunit protein uL15 (147 aa).

Positions 1-54 (MRLSDIKPTPGSMKKRTRVGRGIGSGKGKTSGKGHKGQKARGRGKVHPWFEGGQ) are disordered. Basic residues predominate over residues 30–46 (TSGKGHKGQKARGRGKV).

It belongs to the universal ribosomal protein uL15 family. As to quaternary structure, part of the 50S ribosomal subunit.

Its function is as follows. Binds to the 23S rRNA. In Thermosipho melanesiensis (strain DSM 12029 / CIP 104789 / BI429), this protein is Large ribosomal subunit protein uL15.